Reading from the N-terminus, the 626-residue chain is (+)-3-carene synthase 2, chloroplastic (626 aa).

Residues 1-45 (MSLISAVPLASSCVSKSLISSVREHTALRRAIATLQMSRRGKSVA) constitute a chloroplast transit peptide. Residues D377, D381, and D529 each contribute to the Mg(2+) site. A DDXXD motif motif is present at residues 377 to 381 (DDMYD).

The protein belongs to the terpene synthase family. Tpsd subfamily. It depends on Mg(2+) as a cofactor. Mn(2+) is required as a cofactor.

It localises to the plastid. Its subcellular location is the chloroplast. It carries out the reaction (2E)-geranyl diphosphate = (+)-car-3-ene + diphosphate. It functions in the pathway terpene metabolism; oleoresin biosynthesis. The protein operates within secondary metabolite biosynthesis; terpenoid biosynthesis. Functionally, monoterpene synthase (TPS) involved in the biosynthesis of monoterpene natural products included in conifer oleoresin secretions and volatile emissions; these compounds contribute to biotic and abiotic stress defense against herbivores and pathogens. Catalyzes the conversion of (2E)-geranyl diphosphate (GPP) to (+)-3-carene. In Pinus banksiana (Jack pine), this protein is (+)-3-carene synthase 2, chloroplastic.